A 1491-amino-acid chain; its full sequence is Neurexin-1a (1491 aa).

The signal sequence occupies residues 1-27; that stretch reads MSFSMRNGAHLIWIGLLVCCLVDMGAS. Positions 28–208 constitute a Laminin G-like 1 domain; it reads MEFTGAEGQW…SDICEADHIC (181 aa). Residues 28-1415 lie on the Extracellular side of the membrane; that stretch reads MEFTGAEGQW…EVIRESSSTT (1388 aa). In terms of domain architecture, EGF-like 1 spans 198–236; it reads NSDICEADHICLNGGVCSIVNDEPICDCSETGFQGKDCS. Cystine bridges form between cysteine 202–cysteine 214, cysteine 208–cysteine 223, and cysteine 225–cysteine 235. 2 consecutive Laminin G-like domains span residues 263–460 and 467–661; these read MATF…AFKC and DPVT…KPSC. Residues aspartate 309, leucine 326, and methionine 394 each coordinate Ca(2+). 5 cysteine pairs are disulfide-bonded: cysteine 424–cysteine 460, cysteine 632–cysteine 661, cysteine 669–cysteine 680, cysteine 674–cysteine 689, and cysteine 691–cysteine 701. Positions 665 to 702 constitute an EGF-like 2 domain; sequence PPKQCLSNPCLNSGTCREGWNRYVCDCSGTGYLGRSCE. 2 consecutive Laminin G-like domains span residues 707–880 and 894–1069; these read ILSY…IDYC and DPVT…ERGC. Intrachain disulfides connect cysteine 1041-cysteine 1069, cysteine 1076-cysteine 1087, cysteine 1081-cysteine 1096, and cysteine 1098-cysteine 1108. In terms of domain architecture, EGF-like 3 spans 1072–1109; it reads PSTTCQEDSCSNQGVCLQQWEGFSCDCSMTSYGGPLCN. A Laminin G-like 6 domain is found at 1113–1314; that stretch reads TTYIFGRDGG…DPNVRVEGSA (202 aa). Positions 1318 to 1408 are disordered; sequence GDMPSSSITP…AKGYPSPEVI (91 aa). Over residues 1322 to 1353 the composition is skewed to low complexity; that stretch reads SSSITPQSSVSAAGNRSETSPSITDITTTTAS. Residues 1354–1364 show a composition bias toward polar residues; it reads NRQGKQTTTPQ. A helical transmembrane segment spans residues 1416 to 1436; sequence GMVVGIVAAAALCILILLYAM. The Cytoplasmic portion of the chain corresponds to 1437–1491; sequence YKYRNRDEGSYHVDESRNYISNSATQPNGAAVKEKPIGVPKNKKDKKNKDKEYYV. Residues 1457–1491 form a disordered region; sequence SNSATQPNGAAVKEKPIGVPKNKKDKKNKDKEYYV.

The protein belongs to the neurexin family.

The protein localises to the membrane. Neuronal cell surface protein that may be involved in cell recognition and cell adhesion. In Danio rerio (Zebrafish), this protein is Neurexin-1a (nrxn1a).